The primary structure comprises 286 residues: Bifunctional protein FolD (286 aa).

Residues 166–168 and Ile232 each bind NADP(+); that span reads GAS.

It belongs to the tetrahydrofolate dehydrogenase/cyclohydrolase family. Homodimer.

The enzyme catalyses (6R)-5,10-methylene-5,6,7,8-tetrahydrofolate + NADP(+) = (6R)-5,10-methenyltetrahydrofolate + NADPH. It catalyses the reaction (6R)-5,10-methenyltetrahydrofolate + H2O = (6R)-10-formyltetrahydrofolate + H(+). It participates in one-carbon metabolism; tetrahydrofolate interconversion. Catalyzes the oxidation of 5,10-methylenetetrahydrofolate to 5,10-methenyltetrahydrofolate and then the hydrolysis of 5,10-methenyltetrahydrofolate to 10-formyltetrahydrofolate. This chain is Bifunctional protein FolD, found in Shewanella denitrificans (strain OS217 / ATCC BAA-1090 / DSM 15013).